The following is a 417-amino-acid chain: Serine hydroxymethyltransferase (417 aa).

(6S)-5,6,7,8-tetrahydrofolate contacts are provided by residues Leu121 and Gly125–Leu127. Lys230 is modified (N6-(pyridoxal phosphate)lysine). Ser355–Phe357 lines the (6S)-5,6,7,8-tetrahydrofolate pocket.

Belongs to the SHMT family. In terms of assembly, homodimer. Pyridoxal 5'-phosphate is required as a cofactor.

It localises to the cytoplasm. It catalyses the reaction (6R)-5,10-methylene-5,6,7,8-tetrahydrofolate + glycine + H2O = (6S)-5,6,7,8-tetrahydrofolate + L-serine. It participates in one-carbon metabolism; tetrahydrofolate interconversion. The protein operates within amino-acid biosynthesis; glycine biosynthesis; glycine from L-serine: step 1/1. In terms of biological role, catalyzes the reversible interconversion of serine and glycine with tetrahydrofolate (THF) serving as the one-carbon carrier. This reaction serves as the major source of one-carbon groups required for the biosynthesis of purines, thymidylate, methionine, and other important biomolecules. Also exhibits THF-independent aldolase activity toward beta-hydroxyamino acids, producing glycine and aldehydes, via a retro-aldol mechanism. This is Serine hydroxymethyltransferase from Marinobacter nauticus (strain ATCC 700491 / DSM 11845 / VT8) (Marinobacter aquaeolei).